The sequence spans 456 residues: Argininosuccinate lyase (456 aa).

It belongs to the lyase 1 family. Argininosuccinate lyase subfamily.

The protein resides in the cytoplasm. It catalyses the reaction 2-(N(omega)-L-arginino)succinate = fumarate + L-arginine. Its pathway is amino-acid biosynthesis; L-arginine biosynthesis; L-arginine from L-ornithine and carbamoyl phosphate: step 3/3. This Listeria monocytogenes serotype 4b (strain F2365) protein is Argininosuccinate lyase.